The primary structure comprises 112 residues: Putative UPF0320 protein YEL074W (112 aa).

The disordered stretch occupies residues 93–112 (EKSPSKSPKHKNILPFNFTK).

This sequence belongs to the UPF0320 family.

The polypeptide is Putative UPF0320 protein YEL074W (Saccharomyces cerevisiae (strain ATCC 204508 / S288c) (Baker's yeast)).